Reading from the N-terminus, the 201-residue chain is 3-isopropylmalate dehydratase small subunit (201 aa).

The protein belongs to the LeuD family. LeuD type 1 subfamily. As to quaternary structure, heterodimer of LeuC and LeuD.

The enzyme catalyses (2R,3S)-3-isopropylmalate = (2S)-2-isopropylmalate. Its pathway is amino-acid biosynthesis; L-leucine biosynthesis; L-leucine from 3-methyl-2-oxobutanoate: step 2/4. Its function is as follows. Catalyzes the isomerization between 2-isopropylmalate and 3-isopropylmalate, via the formation of 2-isopropylmaleate. The sequence is that of 3-isopropylmalate dehydratase small subunit from Shewanella pealeana (strain ATCC 700345 / ANG-SQ1).